Here is a 1499-residue protein sequence, read N- to C-terminus: Rap guanine nucleotide exchange factor 2 (1499 aa).

Disordered stretches follow at residues 40–59 and 68–101; these read HVSS…SSSL and SEAG…SDPL. Residues 83 to 94 show a composition bias toward acidic residues; that stretch reads VDSEDDDDEEDI. 135-254 is a binding site for a nucleoside 3',5'-cyclic phosphate; sequence AFANMTMSVR…VEEEGEIVMV (120 aa). The N-terminal Ras-GEF domain occupies 267–380; it reads KGHIVIKGTS…RLLNIACAAK (114 aa). Residues 385–470 form the PDZ domain; sequence LMTLTKPSRE…ITVKTNLFVF (86 aa). S501 is subject to Phosphoserine. Positions 606-692 constitute a Ras-associating domain; sequence PDQVLRVFKA…GRYYLKNNME (87 aa). T644 is modified (phosphothreonine; by PLK2). Positions 717-944 constitute a Ras-GEF domain; it reads STVEVATQLS…SQGSTNATVL (228 aa). Residue S806 is modified to Phosphoserine; by PLK2. S930 carries the post-translational modification Phosphoserine. A Phosphoserine; by PLK2 modification is found at S933. The segment at 1002–1050 is disordered; the sequence is PATNTLPKNPGDKKPVKSETSPVAPRAGSQQKAQSLPQPQQQPPPAHKI. Residue S1022 is modified to Phosphoserine. Residues 1031–1040 show a composition bias toward low complexity; sequence QQKAQSLPQP. Phosphoserine occurs at positions 1080, 1089, 1095, 1116, 1120, and 1159. The segment at 1095–1160 is disordered; it reads SLERHKKQAE…RSSIVSNSSF (66 aa). Low complexity-rich tracts occupy residues 1111-1125 and 1141-1160; these read SSQL…QSSP and SDSG…NSSF. S1176 bears the Phosphoserine; by PLK2 mark. Disordered regions lie at residues 1224–1256 and 1305–1499; these read PSTE…SSGS and TKYN…VSAV. 2 stretches are compositionally biased toward polar residues: residues 1247 to 1256 and 1307 to 1331; these read GSWTSCSSGS and YNRQ…SSTG. The span at 1355–1366 shows a compositional bias: low complexity; that stretch reads EAESSSLTSVTT. The span at 1441–1462 shows a compositional bias: polar residues; sequence SSDTAGPSSVQQPHGHPTSSRP. A compositionally biased stretch (acidic residues) spans 1488 to 1499; it reads TEEDEDEQVSAV.

It belongs to the RAPGEF2 family. As to quaternary structure, interacts with CDH1, CTNNB1 and TJP1. Interacts (via C-terminal domain) with MAGI2 (via PDZ and WW domains); the interaction occurs before or after NGF stimulation. Interacts with KIDINS220 and NTRK1; the interactions occur after NGF stimulation. Found in a complex, at least composed of KIDINS220, MAGI2, NTRK1 and RAPGEF2; the complex is mainly formed at late endosomes in a neuronal growth factor (NGF)-dependent manner. Interacts (via C-terminal domain) with NEDD4 (via WW domains); this interaction leads to ubiquitination and degradation via the proteasome pathway in a cAMP-independent manner. Interacts with MAGI1 isoform 3 (via PDZ domain). Interacts with ADRB1 (via C-terminal PDZ motif); the interaction is direct. Interacts (via Ras-associating domain) with RAP1A (via GTP-bound active form). Interacts weakly with HRAS (via GDP- and GTP-bound forms). Interacts (via C-terminal domain) with MAGI2 (via PDZ and WW domains). Ubiquitinated by NEDD4, leading to proteasomal degradation. In terms of processing, phosphorylation by PLK2 promotes its activity. In terms of tissue distribution, expressed in primary neuronal and endocrine cells (at protein level). Highest expression levels in brain. Lower expression levels in heart, kidney, lung, placenta and blood leukocytes.

It is found in the cytoplasm. The protein resides in the perinuclear region. Its subcellular location is the cell membrane. The protein localises to the late endosome. It localises to the cell junction. Functions as a guanine nucleotide exchange factor (GEF), which activates Rap and Ras family of small GTPases by exchanging bound GDP for free GTP in a cAMP-dependent manner. Serves as a link between cell surface receptors and Rap/Ras GTPases in intracellular signaling cascades. Also acts as an effector for Rap1 by direct association with Rap1-GTP thereby leading to the amplification of Rap1-mediated signaling. Shows weak activity on HRAS. It is controversial whether RAPGEF2 binds cAMP and cGMP or not. Its binding to ligand-activated beta-1 adrenergic receptor ADRB1 leads to the Ras activation through the G(s)-alpha signaling pathway. Involved in the cAMP-induced Ras and Erk1/2 signaling pathway that leads to sustained inhibition of long term melanogenesis by reducing dendrite extension and melanin synthesis. Also provides inhibitory signals for cell proliferation of melanoma cells and promotes their apoptosis in a cAMP-independent nanner. Regulates cAMP-induced neuritogenesis by mediating the Rap1/B-Raf/ERK signaling through a pathway that is independent on both PKA and RAPGEF3/RAPGEF4. Involved in neuron migration and in the formation of the major forebrain fiber connections forming the corpus callosum, the anterior commissure and the hippocampal commissure during brain development. Involved in neuronal growth factor (NGF)-induced sustained activation of Rap1 at late endosomes and in brain-derived neurotrophic factor (BDNF)-induced axon outgrowth of hippocampal neurons. Plays a role in the regulation of embryonic blood vessel formation and in the establishment of basal junction integrity and endothelial barrier function. May be involved in the regulation of the vascular endothelial growth factor receptor KDR and cadherin CDH5 expression at allantois endothelial cell-cell junctions. The sequence is that of Rap guanine nucleotide exchange factor 2 (RAPGEF2) from Homo sapiens (Human).